The primary structure comprises 587 residues: Mitochondrial ribonuclease P catalytic subunit (587 aa).

A mitochondrion-targeting transit peptide spans 1-46; it reads MTFYLSGFRSFLKLWKSNPYFELGPATSSASFFLGVHCVIGNQQRW. The segment at 94–114 is disordered; the sequence is KRSHLSGNPQNQGHTLPVKST. Residues 98–114 are compositionally biased toward polar residues; it reads LSGNPQNQGHTLPVKST. A PRORP domain is found at 342 to 578; it reads IQKSGQCSSC…SCEVPTKWLC (237 aa). Residues C348 and C351 each coordinate Zn(2+). 4 residues coordinate Mg(2+): D409, D478, D479, and D499. Positions 557 and 578 each coordinate Zn(2+).

The protein belongs to the PPR family. P subfamily. In terms of assembly, catalytic component of mitochondrial ribonuclease P, a complex composed of TRMT10C/MRPP1, HSD17B10/MRPP2 and PRORP/MRPP3. Mg(2+) is required as a cofactor. Requires Mn(2+) as cofactor. Degraded by LONP1 following mitochondrial unfolded protein response, probably leading to inhibit translation in mitochondrion.

The protein resides in the mitochondrion. The catalysed reaction is Endonucleolytic cleavage of RNA, removing 5'-extranucleotides from tRNA precursor.. Its function is as follows. Catalytic ribonuclease component of mitochondrial ribonuclease P, a complex composed of TRMT10C/MRPP1, HSD17B10/MRPP2 and PRORP/MRPP3, which cleaves tRNA molecules in their 5'-ends. The presence of TRMT10C/MRPP1, HSD17B10/MRPP2 is required to catalyze tRNA molecules in their 5'-ends. This Rattus norvegicus (Rat) protein is Mitochondrial ribonuclease P catalytic subunit (Prorp).